The primary structure comprises 144 residues: Thyrostimulin alpha-2 subunit (144 aa).

Residues 1–41 form the signal peptide; sequence MGRRDSGRAVAQRYRGVTRGVTVIACLMVVCACVGLCDATG. Disulfide bonds link C52-C107, C66-C121, C76-C136, and C80-C138.

This sequence belongs to the glycoprotein hormones subunit alpha family. As to quaternary structure, heterodimer with GPHB5; non-covalently-linked. In terms of tissue distribution, expressed by the venom duct.

It localises to the secreted. This Conus victoriae (Queen Victoria cone) protein is Thyrostimulin alpha-2 subunit.